We begin with the raw amino-acid sequence, 321 residues long: Glutathione synthetase (321 aa).

Positions 125–311 (EKLFTGWFPH…IAGQFIAFLE (187 aa)) constitute an ATP-grasp domain. ATP is bound at residue 151 to 208 (FIREQKEVVIKPLGAMAGESIFYLTVNDPNIPVVIETMTANGHQLVMAQRFIPEVKSG). Mg(2+)-binding residues include Glu282 and Asn284.

Belongs to the prokaryotic GSH synthase family. It depends on Mg(2+) as a cofactor. Requires Mn(2+) as cofactor.

The enzyme catalyses gamma-L-glutamyl-L-cysteine + glycine + ATP = glutathione + ADP + phosphate + H(+). It functions in the pathway sulfur metabolism; glutathione biosynthesis; glutathione from L-cysteine and L-glutamate: step 2/2. This is Glutathione synthetase from Coxiella burnetii (strain RSA 493 / Nine Mile phase I).